Here is a 253-residue protein sequence, read N- to C-terminus: Ubiquinone/menaquinone biosynthesis C-methyltransferase UbiE (253 aa).

S-adenosyl-L-methionine is bound by residues Thr76, Asp97, 125-126 (NA), and Ser142.

It belongs to the class I-like SAM-binding methyltransferase superfamily. MenG/UbiE family.

The enzyme catalyses a 2-demethylmenaquinol + S-adenosyl-L-methionine = a menaquinol + S-adenosyl-L-homocysteine + H(+). The catalysed reaction is a 2-methoxy-6-(all-trans-polyprenyl)benzene-1,4-diol + S-adenosyl-L-methionine = a 5-methoxy-2-methyl-3-(all-trans-polyprenyl)benzene-1,4-diol + S-adenosyl-L-homocysteine + H(+). Its pathway is quinol/quinone metabolism; menaquinone biosynthesis; menaquinol from 1,4-dihydroxy-2-naphthoate: step 2/2. The protein operates within cofactor biosynthesis; ubiquinone biosynthesis. In terms of biological role, methyltransferase required for the conversion of demethylmenaquinol (DMKH2) to menaquinol (MKH2) and the conversion of 2-polyprenyl-6-methoxy-1,4-benzoquinol (DDMQH2) to 2-polyprenyl-3-methyl-6-methoxy-1,4-benzoquinol (DMQH2). In Xylella fastidiosa (strain M23), this protein is Ubiquinone/menaquinone biosynthesis C-methyltransferase UbiE.